The following is a 932-amino-acid chain: 2-oxoglutarate dehydrogenase E1 component (932 aa).

This sequence belongs to the alpha-ketoglutarate dehydrogenase family. As to quaternary structure, homodimer. Part of the 2-oxoglutarate dehydrogenase (OGDH) complex composed of E1 (2-oxoglutarate dehydrogenase), E2 (dihydrolipoamide succinyltransferase) and E3 (dihydrolipoamide dehydrogenase); the complex contains multiple copies of the three enzymatic components (E1, E2 and E3). The cofactor is thiamine diphosphate.

The enzyme catalyses N(6)-[(R)-lipoyl]-L-lysyl-[protein] + 2-oxoglutarate + H(+) = N(6)-[(R)-S(8)-succinyldihydrolipoyl]-L-lysyl-[protein] + CO2. Functionally, E1 component of the 2-oxoglutarate dehydrogenase (OGDH) complex which catalyzes the decarboxylation of 2-oxoglutarate, the first step in the conversion of 2-oxoglutarate to succinyl-CoA and CO(2). The sequence is that of 2-oxoglutarate dehydrogenase E1 component from Staphylococcus aureus (strain MRSA252).